The sequence spans 232 residues: Ubiquinone biosynthesis O-methyltransferase (232 aa).

4 residues coordinate S-adenosyl-L-methionine: Arg-36, Gly-55, Asp-76, and Leu-120.

Belongs to the methyltransferase superfamily. UbiG/COQ3 family.

The enzyme catalyses a 3-demethylubiquinol + S-adenosyl-L-methionine = a ubiquinol + S-adenosyl-L-homocysteine + H(+). The catalysed reaction is a 3-(all-trans-polyprenyl)benzene-1,2-diol + S-adenosyl-L-methionine = a 2-methoxy-6-(all-trans-polyprenyl)phenol + S-adenosyl-L-homocysteine + H(+). It participates in cofactor biosynthesis; ubiquinone biosynthesis. Its function is as follows. O-methyltransferase that catalyzes the 2 O-methylation steps in the ubiquinone biosynthetic pathway. The chain is Ubiquinone biosynthesis O-methyltransferase from Pseudomonas fluorescens (strain SBW25).